Consider the following 186-residue polypeptide: Peptidyl-tRNA hydrolase (186 aa).

Y14 provides a ligand contact to tRNA. The active-site Proton acceptor is the H19. TRNA is bound by residues F64, N66, and N112.

This sequence belongs to the PTH family. Monomer.

The protein localises to the cytoplasm. It catalyses the reaction an N-acyl-L-alpha-aminoacyl-tRNA + H2O = an N-acyl-L-amino acid + a tRNA + H(+). In terms of biological role, hydrolyzes ribosome-free peptidyl-tRNAs (with 1 or more amino acids incorporated), which drop off the ribosome during protein synthesis, or as a result of ribosome stalling. Functionally, catalyzes the release of premature peptidyl moieties from peptidyl-tRNA molecules trapped in stalled 50S ribosomal subunits, and thus maintains levels of free tRNAs and 50S ribosomes. In Listeria monocytogenes serotype 4b (strain CLIP80459), this protein is Peptidyl-tRNA hydrolase.